The sequence spans 358 residues: Alanine racemase (358 aa).

K35 (proton acceptor; specific for D-alanine) is an active-site residue. Residue K35 is modified to N6-(pyridoxal phosphate)lysine. Residue R130 participates in substrate binding. Y255 functions as the Proton acceptor; specific for L-alanine in the catalytic mechanism. Residue M303 participates in substrate binding.

This sequence belongs to the alanine racemase family. Requires pyridoxal 5'-phosphate as cofactor.

The enzyme catalyses L-alanine = D-alanine. It participates in amino-acid biosynthesis; D-alanine biosynthesis; D-alanine from L-alanine: step 1/1. Functionally, catalyzes the interconversion of L-alanine and D-alanine. May also act on other amino acids. The polypeptide is Alanine racemase (alr) (Shewanella baltica (strain OS223)).